The chain runs to 88 residues: C-C motif chemokine 18 (88 aa).

The N-terminal stretch at methionine 1 to cysteine 19 is a signal peptide. 2 cysteine pairs are disulfide-bonded: cysteine 29–cysteine 53 and cysteine 30–cysteine 69.

It belongs to the intercrine beta (chemokine CC) family. The Cys-29/Cys-53 disulfide bond is required for activity.

It is found in the secreted. Functionally, chemotactic factor that attracts lymphocytes but not monocytes or granulocytes. May be involved in B-cell migration into B-cell follicles in lymph nodes. Attracts naive T-lymphocytes toward dendritic cells and activated macrophages in lymph nodes, has chemotactic activity for naive T-cells, CD4+ and CD8+ T-cells and thus may play a role in both humoral and cell-mediated immunity responses. The polypeptide is C-C motif chemokine 18 (CCL18) (Macaca mulatta (Rhesus macaque)).